Here is an 88-residue protein sequence, read N- to C-terminus: Small ribosomal subunit protein bS16c (88 aa).

This sequence belongs to the bacterial ribosomal protein bS16 family.

Its subcellular location is the plastid. The protein resides in the chloroplast. The sequence is that of Small ribosomal subunit protein bS16c from Solanum bulbocastanum (Wild potato).